The primary structure comprises 104 residues: MIPGEVVCAEGVIELNEGSPRTELEVVNTGDRPVQVGSHVHFPQSNHALQFDRSAAHGLRLDIPAGTAVRFEPGIAQTISLVPLRGTREVHGLSLTPPGKLDAS.

Belongs to the urease beta subunit family. As to quaternary structure, heterotrimer of UreA (gamma), UreB (beta) and UreC (alpha) subunits. Three heterotrimers associate to form the active enzyme.

The protein resides in the cytoplasm. The catalysed reaction is urea + 2 H2O + H(+) = hydrogencarbonate + 2 NH4(+). The protein operates within nitrogen metabolism; urea degradation; CO(2) and NH(3) from urea (urease route): step 1/1. This Rhodococcus jostii (strain RHA1) protein is Urease subunit beta.